We begin with the raw amino-acid sequence, 249 residues long: Molybdate/tungstate transport system permease protein WtpB (249 aa).

The Cytoplasmic segment spans residues 1–5 (MEKFD). The helical transmembrane segment at 6–26 (IAMTVFLVMIFLFIFLPIIYM) threads the bilayer. Topologically, residues 27 to 48 (LSNPGDLNQLLDKEVIEAFKTT) are extracellular. Positions 45–240 (FKTTLLAGAV…LISIALFALL (196 aa)) constitute an ABC transmembrane type-1 domain. The helical transmembrane segment at 49–69 (LLAGAVATLIALIFGIPTGYI) threads the bilayer. The Cytoplasmic portion of the chain corresponds to 70-93 (LARYDFKFKSFVEAVLDLPMAIPH). A helical transmembrane segment spans residues 94–114 (SVIGIIILSFIYGIDIINFIG). Residues 115–116 (RY) lie on the Extracellular side of the membrane. The helical transmembrane segment at 117–137 (VVDNFWGIVTVYLFVGIPFMV) threads the bilayer. Residues 138–177 (NSIRDGFLSVDEEIEYVSRTLGASKIRTFFEISLPLIKNN) lie on the Cytoplasmic side of the membrane. A helical transmembrane segment spans residues 178-198 (IISGIILSFARGISEVGAILI). The Extracellular portion of the chain corresponds to 199-223 (IAYYPKTVPILIYERFMSFGLDASK). Residues 224–244 (PISVGMILISIALFALLRMFG) traverse the membrane as a helical segment. The Cytoplasmic portion of the chain corresponds to 245–249 (RMRGR).

The protein belongs to the binding-protein-dependent transport system permease family. The complex is composed of two ATP-binding proteins (WtpC), two transmembrane proteins (WtpB) and a solute-binding protein (WtpA).

The protein localises to the cell membrane. Functionally, part of the ABC transporter complex WtpABC involved in molybdate/tungstate import. Probably responsible for the translocation of the substrate across the membrane. The protein is Molybdate/tungstate transport system permease protein WtpB (wtpB) of Methanocaldococcus jannaschii (strain ATCC 43067 / DSM 2661 / JAL-1 / JCM 10045 / NBRC 100440) (Methanococcus jannaschii).